The primary structure comprises 303 residues: Probable cell division protein WhiA (303 aa).

The segment at residues 272–303 is a DNA-binding region (H-T-H motif); sequence SIQQLADSLSRPLTKSGVNHRLRKINKIADEL.

This sequence belongs to the WhiA family.

Functionally, involved in cell division and chromosome segregation. The polypeptide is Probable cell division protein WhiA (Streptococcus sanguinis (strain SK36)).